A 162-amino-acid chain; its full sequence is Phosphopantetheine adenylyltransferase (162 aa).

Thr-10 serves as a coordination point for substrate. Residues 10–11 and His-18 contribute to the ATP site; that span reads TF. Lys-42, Leu-74, and Arg-88 together coordinate substrate. Residues 89-91, Glu-99, and 124-130 contribute to the ATP site; these read GLR and FSCISST.

This sequence belongs to the bacterial CoaD family. Homohexamer. Mg(2+) serves as cofactor.

It localises to the cytoplasm. It carries out the reaction (R)-4'-phosphopantetheine + ATP + H(+) = 3'-dephospho-CoA + diphosphate. It participates in cofactor biosynthesis; coenzyme A biosynthesis; CoA from (R)-pantothenate: step 4/5. Reversibly transfers an adenylyl group from ATP to 4'-phosphopantetheine, yielding dephospho-CoA (dPCoA) and pyrophosphate. The sequence is that of Phosphopantetheine adenylyltransferase from Francisella tularensis subsp. novicida (strain U112).